Here is a 447-residue protein sequence, read N- to C-terminus: Serine/threonine-protein phosphatase 2A 55 kDa regulatory subunit B gamma isoform (447 aa).

WD repeat units lie at residues Thr-22–Pro-61, Glu-87–Glu-128, Gly-171–Asn-209, Asp-220–Lys-260, Glu-279–Glu-317, Glu-334–Leu-375, and Asp-410–Met-446.

Belongs to the phosphatase 2A regulatory subunit B family. PP2A consists of a common heterodimeric core enzyme, composed of a 36 kDa catalytic subunit (subunit C) and a 65 kDa constant regulatory subunit (PR65 or subunit A), that associates with a variety of regulatory subunits. Proteins that associate with the core dimer include three families of regulatory subunits B (the R2/B/PR55/B55, R3/B''/PR72/PR130/PR59 and R5/B'/B56 families), the 48 kDa variable regulatory subunit, viral proteins, and cell signaling molecules. Interacts with IER5.

In terms of biological role, the B regulatory subunit might modulate substrate selectivity and catalytic activity, and might also direct the localization of the catalytic enzyme to a particular subcellular compartment. This Homo sapiens (Human) protein is Serine/threonine-protein phosphatase 2A 55 kDa regulatory subunit B gamma isoform (PPP2R2C).